We begin with the raw amino-acid sequence, 558 residues long: Arginine--tRNA ligase (558 aa).

The 'HIGH' region motif lies at 134-144 (ANPTGPMVLVQ).

It belongs to the class-I aminoacyl-tRNA synthetase family. Monomer.

The protein localises to the cytoplasm. The catalysed reaction is tRNA(Arg) + L-arginine + ATP = L-arginyl-tRNA(Arg) + AMP + diphosphate. This is Arginine--tRNA ligase from Symbiobacterium thermophilum (strain DSM 24528 / JCM 14929 / IAM 14863 / T).